We begin with the raw amino-acid sequence, 759 residues long: Pseudocleavage protein nop-1 (759 aa).

5 disordered regions span residues 1 to 46 (MSAP…SSIF), 334 to 361 (KIFP…MDKK), 379 to 413 (LSVN…NLSQ), 440 to 495 (QSSR…KKER), and 732 to 759 (ESDG…GAKI). A compositionally biased stretch (basic and acidic residues) spans 10–42 (DIHSDDRDHADHQTKKEKHWFEEKSEQNGENRR). Positions 448–465 (TGNSSISSGVGSIASGTS) are enriched in low complexity. Residues 473 to 482 (GSRSGQSISR) are compositionally biased toward polar residues. Positions 485–495 (SRRDDEGKKER) are enriched in basic and acidic residues. The span at 736 to 759 (PASSNDDFDTQSTASTSTVFGAKI) shows a compositional bias: polar residues.

It localises to the nucleus. Its subcellular location is the cytoplasm. The protein localises to the cell cortex. The protein resides in the cleavage furrow. In terms of biological role, required for formation of the pseudocleavage furrow during the first cleavage of the embryo and also mediates aster-induced furrowing during cytokinesis. Promotes cortical recruitment of ani-1 and nmy-2 during pseudocleavage and cytokinesis and promotes the accumulation of actin at furrowing regions. Regulates establishment of embryonic cell polarity. The polypeptide is Pseudocleavage protein nop-1 (nop-1) (Caenorhabditis elegans).